The following is a 602-amino-acid chain: Elongation factor 4 (602 aa).

Residues 7–189 (NNIRNFSIIA…RILTAVPPPQ (183 aa)) form the tr-type G domain. GTP is bound by residues 19–24 (DHGKST) and 136–139 (NKID).

This sequence belongs to the TRAFAC class translation factor GTPase superfamily. Classic translation factor GTPase family. LepA subfamily.

It is found in the cell inner membrane. The enzyme catalyses GTP + H2O = GDP + phosphate + H(+). Its function is as follows. Required for accurate and efficient protein synthesis under certain stress conditions. May act as a fidelity factor of the translation reaction, by catalyzing a one-codon backward translocation of tRNAs on improperly translocated ribosomes. Back-translocation proceeds from a post-translocation (POST) complex to a pre-translocation (PRE) complex, thus giving elongation factor G a second chance to translocate the tRNAs correctly. Binds to ribosomes in a GTP-dependent manner. The protein is Elongation factor 4 of Protochlamydia amoebophila (strain UWE25).